The sequence spans 307 residues: Cysteine synthase (307 aa).

An N6-(pyridoxal phosphate)lysine modification is found at lysine 42. Pyridoxal 5'-phosphate-binding positions include asparagine 72, glycine 176 to histidine 180, and serine 263.

This sequence belongs to the cysteine synthase/cystathionine beta-synthase family. Pyridoxal 5'-phosphate serves as cofactor.

It catalyses the reaction O-acetyl-L-serine + hydrogen sulfide = L-cysteine + acetate. It participates in amino-acid biosynthesis; L-cysteine biosynthesis; L-cysteine from L-serine: step 2/2. The protein is Cysteine synthase (cysK) of Flavobacterium sp. (strain K3-15 / DSM ID92-509).